We begin with the raw amino-acid sequence, 550 residues long: Selinene synthase (550 aa).

Residues D314, D318, D450, and E458 each contribute to the Mg(2+) site. The DDXXD motif motif lies at 314-318; it reads DDIYD.

Belongs to the terpene synthase family. The cofactor is Mg(2+). Requires Mn(2+) as cofactor.

The catalysed reaction is (2E,6E)-farnesyl diphosphate = (+)-beta-selinene + diphosphate. The enzyme catalyses (2E,6E)-farnesyl diphosphate = alpha-selinene + diphosphate. Its pathway is secondary metabolite biosynthesis; terpenoid biosynthesis. Its function is as follows. Sesquiterpene synthase that catalyzes the formation of alpha- and beta-selinene from trans,trans-farnesyl diphosphate (FPP). Also produces some nerolidol. The sequence is that of Selinene synthase (SES) from Ocimum basilicum (Sweet basil).